The sequence spans 154 residues: Putative nickel-responsive regulator (154 aa).

Histidine 95, histidine 106, histidine 108, and cysteine 114 together coordinate Ni(2+).

Belongs to the transcriptional regulatory CopG/NikR family. It depends on Ni(2+) as a cofactor.

Its function is as follows. Transcriptional regulator. This chain is Putative nickel-responsive regulator, found in Caldanaerobacter subterraneus subsp. tengcongensis (strain DSM 15242 / JCM 11007 / NBRC 100824 / MB4) (Thermoanaerobacter tengcongensis).